The sequence spans 121 residues: Large ribosomal subunit protein bL12 (121 aa).

This sequence belongs to the bacterial ribosomal protein bL12 family. In terms of assembly, homodimer. Part of the ribosomal stalk of the 50S ribosomal subunit. Forms a multimeric L10(L12)X complex, where L10 forms an elongated spine to which 2 to 4 L12 dimers bind in a sequential fashion. Binds GTP-bound translation factors.

Its function is as follows. Forms part of the ribosomal stalk which helps the ribosome interact with GTP-bound translation factors. Is thus essential for accurate translation. In Mesomycoplasma hyopneumoniae (strain 7448) (Mycoplasma hyopneumoniae), this protein is Large ribosomal subunit protein bL12.